The following is a 328-amino-acid chain: MDAYERITRNAAEVVTEEEIEAMADDPDGKRAYVGYEPSGVLHIGHMLTANKLIDLQEAGFEVTVLLADVHAYLNDKGSFEEIRHTAERMRDQFIAYGLDESNTQFVLGSDFQLDDDYTLDLHSLELETTLARAERAMAEITSGDSVKVSQAVYPLMQALDIPYLGVDLAVGGMEQRKVHMLARDVLPSIDREPPTSLHTPLIADLGTGRGKMSSSEGVTISMEDSREDIESKVNDAYCPRTADPEPTDDGQSRENPVLQVFEYHVFPRFDTVVVERPEEYGGDLEYDSYDALEAELESGELHPADAKGALAEYLNRLIAPGREQLAE.

Position 33 (tyrosine 33) interacts with L-tyrosine. Residues 38 to 46 carry the 'HIGH' region motif; it reads PSGVLHIGH. L-tyrosine-binding residues include tyrosine 154, glutamine 158, aspartate 161, and glutamine 176. Positions 193–227 are disordered; it reads EPPTSLHTPLIADLGTGRGKMSSSEGVTISMEDSR. The 'KMSKS' region signature appears at 212 to 216; that stretch reads KMSSS. ATP is bound at residue serine 215.

This sequence belongs to the class-I aminoacyl-tRNA synthetase family. TyrS type 3 subfamily. In terms of assembly, homodimer.

It is found in the cytoplasm. The catalysed reaction is tRNA(Tyr) + L-tyrosine + ATP = L-tyrosyl-tRNA(Tyr) + AMP + diphosphate + H(+). In terms of biological role, catalyzes the attachment of tyrosine to tRNA(Tyr) in a two-step reaction: tyrosine is first activated by ATP to form Tyr-AMP and then transferred to the acceptor end of tRNA(Tyr). This chain is Tyrosine--tRNA ligase, found in Halorubrum lacusprofundi (strain ATCC 49239 / DSM 5036 / JCM 8891 / ACAM 34).